A 93-amino-acid chain; its full sequence is Phosphoribosyl-ATP pyrophosphatase (93 aa).

It belongs to the PRA-PH family.

Its subcellular location is the cytoplasm. The enzyme catalyses 1-(5-phospho-beta-D-ribosyl)-ATP + H2O = 1-(5-phospho-beta-D-ribosyl)-5'-AMP + diphosphate + H(+). It functions in the pathway amino-acid biosynthesis; L-histidine biosynthesis; L-histidine from 5-phospho-alpha-D-ribose 1-diphosphate: step 2/9. The sequence is that of Phosphoribosyl-ATP pyrophosphatase from Mycobacterium avium (strain 104).